The following is a 728-amino-acid chain: MARELAAVYAQVFDLAAEVSLLGYCDPSSIDKRCVMANSNKVFKLCESLLPCLRLQNDTECSPLSLELQHLLQNTREALGVLTDLLSGDPSRSEYFEALHPSRPLEGPCKRHARVRVPFYGGAEKTVSLSLLNDVEVFFKRLNSVFYCLPAEGALEALGETVAFLGRLRGVSPIPPADAYVSSVPCASCFAEAAMLPNQGESVLSMLAAVNCNHVCRQVPSDPVIGVFENELRHLGADARAAGRAGGGRESERRGREDADDEEDDEEEPRDGQGDAGDGAALRVLTESSLSVLAGHTIFEEEDGRLAEISNLVYWSSAADRGGVGGTARATSSSHMAKLFAHEARMHRSRAWLGRGAPSHFFDAHRPSPLESLFCGGVFNSIDDTIAALQKDCSATFLKKSNYQTLIQQQNELYVRLNEVLNGAGRDEGGAKGAEAIADAEPLKPDGGASCDPRDVLSDARVRRDLYLKKLTRDGLRRLTDCIETHGRVLSDTLSLRVWGSALYASAARLVNHFLFRRQFVGLGWADLTAGGEAAFENSKYIKNALHGQRLNREHLDSIVVHFYRLITGPLSLQNSHFPVPDNVALAYCLDAAGAMPHQKLVITEMIWPGIESKDWIDCNFNSFYSIETGDLNLTQKKTLNYIREAVLSISLYNRVWEKSLSLLSATELRGSCLAESASGELGEGVYLTYEGTAPLVLVFDSKGYVFKDLYTLLYTHLQLSGRRQASV.

The segment at 186-214 (CASCFAEAAMLPNQGESVLSMLAAVNCNH) adopts a C3H1-type zinc-finger fold. Positions 239–278 (ARAAGRAGGGRESERRGREDADDEEDDEEEPRDGQGDAGD) are disordered. Over residues 247-257 (GGRESERRGRE) the composition is skewed to basic and acidic residues. The span at 258 to 269 (DADDEEDDEEEP) shows a compositional bias: acidic residues. 653 to 660 (YNRVWEKS) serves as a coordination point for ATP.

The protein belongs to the herpesviridae TRM1 protein family. As to quaternary structure, associates with TRM2 and TRM3 to form the tripartite terminase complex. Interacts with portal protein.

The protein localises to the host nucleus. Component of the molecular motor that translocates viral genomic DNA in empty capsid during DNA packaging. Forms a tripartite terminase complex together with TRM2 and TRM3 in the host cytoplasm. Once the complex reaches the host nucleus, it interacts with the capsid portal vertex. This portal forms a ring in which genomic DNA is translocated into the capsid. TRM1 carries an endonuclease activity that plays an important role for the cleavage of concatemeric viral DNA into unit length genomes. In Equine herpesvirus 2 (strain 86/87) (EHV-2), this protein is Tripartite terminase subunit 1.